Here is a 71-residue protein sequence, read N- to C-terminus: Brevinin-1CG4 (71 aa).

A signal peptide spans 1–22; the sequence is MFTLKKSLLLLFFLGTINLSLC. A propeptide spans 23-45 (removed in mature form); sequence EQERNADEEERRDDSDKRDVEVE. Cys65 and Cys71 are joined by a disulfide.

Belongs to the frog skin active peptide (FSAP) family. Brevinin subfamily. In terms of tissue distribution, expressed by the skin glands.

The protein localises to the secreted. Its function is as follows. Antimicrobial peptide active against a variety of Gram-positive and some Gram-negative bacterial strains. Has antifungal activity against C.albicans ATCC 10231 and a slime mold isolate. Has hemolytic activity against human erythrocytes. The chain is Brevinin-1CG4 from Amolops chunganensis (Chungan torrent frog).